The chain runs to 228 residues: Probable 26S proteasome regulatory subunit p28 (228 aa).

ANK repeat units lie at residues 1–30, 35–64, 71–100, 106–135, 139–168, and 173–203; these read MSNYPLHQACMENEFFKVQELLHSKPSLLL, DGRIPLHWSVSFQAHEITSFLLSKMENVNL, SGWTPFHIACSVGNLEVVKSLYDRPLKPDL, QGVTCLHLAVGKKWFEVSQFLIENGASVRI, FNQIPLHRAASVGSLKLIELLCGLGKSAVN, and QGWTPLFHALAEGHGDAAVLLVEKYGAEYDL.

In terms of assembly, interacts with RPT3.

Functionally, acts as a chaperone during the assembly of the 26S proteasome, specifically of the 19S regulatory complex (RC) and appears to have an overlapping role with RPN14. The protein is Probable 26S proteasome regulatory subunit p28 (NAS6) of Saccharomyces cerevisiae (strain ATCC 204508 / S288c) (Baker's yeast).